A 346-amino-acid chain; its full sequence is MPTNFAAIVPGKNQSLVVQEAPYPTAGENRIVVRVHALAVNAVDYATQMMGETLFPWVTYPLVLGEDIAGEVVAIGPGVTRFKPGDRVVGHAVGTNSNNSAEGAFQQYVVLLENMASPLPHALEYQQAAVVPLAFSTAIVGLFQKDYLGLQIPSLTPTRTGKTLLIWGGATSVGCNAIQLAVAAGYEVITTCSPHNFDLVKSLGATAAFDYKKPSIRDDLREAFRGKTCAGALAIAGVVPQTRNEAAEACLNLVAESEGDKFVALSMPAPPNVPDGVSCKFIFASTVKDNEVSHQLYGYLGEALAHGSFIAAPEAEVVGTGLEAVQGALNALKQGVSAKKLVVTLP.

Val-43–Gln-48 serves as a coordination point for NADP(+). A substrate-binding site is contributed by Leu-133–Val-140. NADP(+)-binding positions include Ala-170–Val-173, Ser-193–Asn-196, Tyr-211, and Leu-251–Asn-252. Ala-269–Val-273 contacts substrate. Residue Val-336–Ser-337 participates in NADP(+) binding.

It belongs to the zinc-containing alcohol dehydrogenase family.

The protein operates within secondary metabolite biosynthesis. Its function is as follows. Dehydrogenase; part of the gene cluster that mediates the biosynthesis of nigerpyrone and its derivatives carbonarone A and pestalamide A. The biosynthesis pathway begins with the polyketide assembly by epaA to form phenylacetyl triketide precursor from successive condensation of two malonyl-CoA, presumably with one phenylacetyl-CoA starter unit produced by the phenylacetyl-CoA ligase epaB. For the nigerpyrone biosynthesis, the reactive polyketide chain is released as an aldehyde through the R-domain. A nonenzymatic cyclization and dehydration may create nigerpyrone. For the biosynthesis of carbonarone A and pestalamide A, an extra methyl group is added through the C-methyltransferase domain. Several further steps involving the dehydrogenase orf1, the cytochrome P450 monooxygenase orf2 and the FAD-dependent monooxygenase orf3 are required to form a carbonarone A precursor which is converted to carbonarone A via cyclization. The O-acetyltransferase epaC could catalyze the transfer of 2-methylsuccinyl-CoA, a common intermediate in the ethylmalonyl-CoA pathway, to generate the final product pestalamide A. The chain is Dehydrogenase orf1 from Aspergillus niger (strain ATCC MYA-4892 / CBS 513.88 / FGSC A1513).